A 157-amino-acid polypeptide reads, in one-letter code: MSRRRRADKREVLPDPKFGDLVVTKFMNYVMYEGKKAVAENIVYGAFDILEARRKDMGPLETFHAALDNVAPAIEVRSRRVGGATYQVPVEVRPERRRALAIRWLVNAARSRGENTMTEKLAGELLDASSNRGSAVKKREDTHKMAEANRAFSHYRW.

The protein belongs to the universal ribosomal protein uS7 family. In terms of assembly, part of the 30S ribosomal subunit. Contacts proteins S9 and S11.

Its function is as follows. One of the primary rRNA binding proteins, it binds directly to 16S rRNA where it nucleates assembly of the head domain of the 30S subunit. Is located at the subunit interface close to the decoding center, probably blocks exit of the E-site tRNA. This is Small ribosomal subunit protein uS7 from Phenylobacterium zucineum (strain HLK1).